The following is a 429-amino-acid chain: Probable M18 family aminopeptidase 2 (429 aa).

Zn(2+)-binding residues include H82, H156, and H401.

The protein belongs to the peptidase M18 family. The cofactor is Zn(2+).

The polypeptide is Probable M18 family aminopeptidase 2 (Ectopseudomonas mendocina (strain ymp) (Pseudomonas mendocina)).